Here is a 178-residue protein sequence, read N- to C-terminus: Ribosomal RNA small subunit methyltransferase G (178 aa).

S-adenosyl-L-methionine is bound by residues G54, L59, 105-106 (LE), and R120.

The protein belongs to the methyltransferase superfamily. RNA methyltransferase RsmG family.

The protein localises to the cytoplasm. It carries out the reaction guanosine(527) in 16S rRNA + S-adenosyl-L-methionine = N(7)-methylguanosine(527) in 16S rRNA + S-adenosyl-L-homocysteine. Its function is as follows. Specifically methylates the N7 position of guanine in position 527 of 16S rRNA. This is Ribosomal RNA small subunit methyltransferase G from Helicobacter pylori (strain J99 / ATCC 700824) (Campylobacter pylori J99).